The primary structure comprises 228 residues: MNASDLIRIMQFGDSVLPVGAFTFSNGVESAIQTGIVHDVATLKGFVLTALKQAASCDGMGVVVAHRAVVADDRDGIIRADWAVNNRKLNEESRLMATRMGKKLAEMSIHVVEHPLISWWLEQIKNGNTAGTYPVTQAVVMAAQGIGQREVVVMHQYGVAMTILSAAMRLMRVTHFDTQHILFELNHDIEKFCDIAEIGDINQMSSYVPIVDVLAAVHVKAHVRLFSN.

The protein belongs to the UreF family. UreD, UreF and UreG form a complex that acts as a GTP-hydrolysis-dependent molecular chaperone, activating the urease apoprotein by helping to assemble the nickel containing metallocenter of UreC. The UreE protein probably delivers the nickel.

It localises to the cytoplasm. In terms of biological role, required for maturation of urease via the functional incorporation of the urease nickel metallocenter. The chain is Urease accessory protein UreF from Yersinia pestis bv. Antiqua (strain Antiqua).